The sequence spans 304 residues: tRNA pseudouridine synthase B (304 aa).

The active-site Nucleophile is Asp-41.

This sequence belongs to the pseudouridine synthase TruB family. Type 1 subfamily.

The enzyme catalyses uridine(55) in tRNA = pseudouridine(55) in tRNA. Responsible for synthesis of pseudouridine from uracil-55 in the psi GC loop of transfer RNAs. This is tRNA pseudouridine synthase B from Nitratidesulfovibrio vulgaris (strain ATCC 29579 / DSM 644 / CCUG 34227 / NCIMB 8303 / VKM B-1760 / Hildenborough) (Desulfovibrio vulgaris).